A 165-amino-acid chain; its full sequence is Yapsin-5 (165 aa).

A signal peptide spans 1–24 (MQLFSILSLLSSLMCSLTVLGSSA). Asparagine 57 carries N-linked (GlcNAc...) asparagine glycosylation. The Peptidase A1 domain maps to 67 to 165 (YVVKMEIGTP…TRLSSMTYTY (99 aa)).

This sequence belongs to the peptidase A1 family.

The chain is Yapsin-5 (YPS5) from Saccharomyces cerevisiae (strain ATCC 204508 / S288c) (Baker's yeast).